A 161-amino-acid polypeptide reads, in one-letter code: Endoribonuclease YbeY (161 aa).

Zn(2+)-binding residues include H121, H125, and H131.

Belongs to the endoribonuclease YbeY family. Zn(2+) is required as a cofactor.

It is found in the cytoplasm. Single strand-specific metallo-endoribonuclease involved in late-stage 70S ribosome quality control and in maturation of the 3' terminus of the 16S rRNA. The chain is Endoribonuclease YbeY from Xanthomonas oryzae pv. oryzae (strain MAFF 311018).